We begin with the raw amino-acid sequence, 342 residues long: Ribosomal RNA small subunit methyltransferase C (342 aa).

It belongs to the methyltransferase superfamily. RsmC family. In terms of assembly, monomer.

Its subcellular location is the cytoplasm. It carries out the reaction guanosine(1207) in 16S rRNA + S-adenosyl-L-methionine = N(2)-methylguanosine(1207) in 16S rRNA + S-adenosyl-L-homocysteine + H(+). Specifically methylates the guanine in position 1207 of 16S rRNA in the 30S particle. This is Ribosomal RNA small subunit methyltransferase C from Shewanella sp. (strain MR-4).